Consider the following 108-residue polypeptide: uncharacterized protein (108 aa).

It to M.jannaschii MJ1245 and M.thermoautotrophicum MTH1110.

This is an uncharacterized protein from Methanocaldococcus jannaschii (strain ATCC 43067 / DSM 2661 / JAL-1 / JCM 10045 / NBRC 100440) (Methanococcus jannaschii).